A 113-amino-acid chain; its full sequence is UPF0251 protein Teth514_1147 (113 aa).

The protein belongs to the UPF0251 family.

The chain is UPF0251 protein Teth514_1147 from Thermoanaerobacter sp. (strain X514).